The sequence spans 342 residues: Olfactory receptor 51F2 (342 aa).

At 1–39 (MTETSLSSQCFPMSVLNNTIAEPLIFLLMGIPGLKATQY) the chain is on the extracellular side. N-linked (GlcNAc...) asparagine glycosylation occurs at Asn-17. The helical transmembrane segment at 40-60 (WISIPFCLLYVVAVSGNSMIL) threads the bilayer. Residues 61–68 (FVVLCERS) lie on the Cytoplasmic side of the membrane. Residues 69–89 (LHKPMYYFLSMLSATDLSLSL) traverse the membrane as a helical segment. At 90 to 113 (CTLSTTLGVFWFEAREINLNACIA) the chain is on the extracellular side. Cys-111 and Cys-203 are disulfide-bonded. The helical transmembrane segment at 114–134 (QMFFLHGFTFMESGVLLAMAF) threads the bilayer. The Cytoplasmic portion of the chain corresponds to 135–153 (DRFVAICYPLRYTTILTNA). The helical transmembrane segment at 154-174 (RIAKIGMSMLIRNVAVMLPVM) threads the bilayer. The Extracellular portion of the chain corresponds to 175 to 210 (LFVKRLSFCSSMVLSHSYCYHVDLIQLSCTDNRINS). A helical transmembrane segment spans residues 211 to 231 (ILGLFALLSTTGFDCPCILLS). The Cytoplasmic portion of the chain corresponds to 232 to 251 (YILIIRSVLSIASSEERRKA). Residues 252-272 (FNTCTSHISAVSIFYLPLISL) form a helical membrane-spanning segment. Topologically, residues 273–287 (SLVHRYGHSAPPFVH) are extracellular. The chain crosses the membrane as a helical span at residues 288-308 (IIMANVFLLIPPVLNPIIYSV). Residues 309–342 (KIKQIQKAIIKVLIQKHSKSNHQLFLIRDKAIYE) lie on the Cytoplasmic side of the membrane.

Belongs to the G-protein coupled receptor 1 family.

The protein resides in the cell membrane. Odorant receptor. The sequence is that of Olfactory receptor 51F2 (OR51F2) from Homo sapiens (Human).